A 425-amino-acid chain; its full sequence is Serine--tRNA ligase (425 aa).

233 to 235 (TAE) serves as a coordination point for L-serine. 264–266 (RAE) contacts ATP. Glutamate 287 is an L-serine binding site. 351 to 354 (EISS) is a binding site for ATP. Serine 387 lines the L-serine pocket.

The protein belongs to the class-II aminoacyl-tRNA synthetase family. Type-1 seryl-tRNA synthetase subfamily. In terms of assembly, homodimer. The tRNA molecule binds across the dimer.

The protein localises to the cytoplasm. The catalysed reaction is tRNA(Ser) + L-serine + ATP = L-seryl-tRNA(Ser) + AMP + diphosphate + H(+). It carries out the reaction tRNA(Sec) + L-serine + ATP = L-seryl-tRNA(Sec) + AMP + diphosphate + H(+). Its pathway is aminoacyl-tRNA biosynthesis; selenocysteinyl-tRNA(Sec) biosynthesis; L-seryl-tRNA(Sec) from L-serine and tRNA(Sec): step 1/1. Functionally, catalyzes the attachment of serine to tRNA(Ser). Is also able to aminoacylate tRNA(Sec) with serine, to form the misacylated tRNA L-seryl-tRNA(Sec), which will be further converted into selenocysteinyl-tRNA(Sec). The chain is Serine--tRNA ligase from Clostridium botulinum (strain Eklund 17B / Type B).